Reading from the N-terminus, the 662-residue chain is MTKETIRVVICGDEGVGKSSLIVSLTKAEFIPTIQDVLPPISIPRDFSSSPTYSPKNTVLIDTSDSDLIALDHELKSADVIWLVYCDHESYDHVSLFWLPHFRSLGLNIPVILCKNKCDSISNVNANAMVVSENSDDDIDTKVEDEEFIPILMEFKEIDTCIKTSAKTQFDLNQAFYLCQRAITHPISPLFDAMVGELKPLAVMALKRIFLLSDLNQDSYLDDNEILGLQKKCFNKSIDVNELNFIKDLLLDISKHDQEYINRKLYVPGKGITKDGFLVLNKIYAERGRHETTWAILRTFHYTDSLCINDKILHPRLVVPDTSSVELSPKGYRFLVDIFLKFDIDNDGGLNNQELHRLFKCTPGLPKLWTSTNFPFSTVVNNKGCITLQGWLAQWSMTTFLNYSTTTAYLVYFGFQEDARLALQVTKPRKMRRRSGKLYRSNINDRKVFNCFVIGKPCCGKSSLLEAFLGRSFSEEYSPTIKPRIAVNSLELKGGKQYYLILQELGEQEYAILENKDKLKECDVICLTYDSSDPESFSYLVSLLDKFTHLQDLPLVFVASKADLDKQQQRCQIQPDELADELFVNHPLHISSRWLSSLNELFIKITEAALDPGKNTPGLPEETAAKDVDYRQTALIFGSTVGFVALCSFTLMKLFKSSKFSK.

Topologically, residues 1 to 634 are cytoplasmic; it reads MTKETIRVVI…AKDVDYRQTA (634 aa). The Miro 1 domain maps to 3–185; it reads KETIRVVICG…FYLCQRAITH (183 aa). Residues 12–19, 62–64, and 116–119 each bind GTP; these read GDEGVGKS, DTS, and NKCD. EF-hand domains follow at residues 201–236 and 330–365; these read LAVM…CFNK and KGYR…TPGL. Ca(2+)-binding residues include Asp-214, Asn-216, Asp-218, Tyr-220, Glu-225, Asp-343, Asp-345, Asp-347, and Glu-354. The 166-residue stretch at 446–611 folds into the Miro 2 domain; that stretch reads RKVFNCFVIG…FIKITEAALD (166 aa). GTP is bound by residues 455 to 462, 491 to 495, and 560 to 563; these read GKPCCGKS, ELKGG, and SKAD. The helical; Anchor for type IV membrane protein transmembrane segment at 635–655 threads the bilayer; the sequence is LIFGSTVGFVALCSFTLMKLF. At 656–662 the chain is on the mitochondrial intermembrane side; it reads KSSKFSK.

The protein belongs to the mitochondrial Rho GTPase family.

Its subcellular location is the mitochondrion outer membrane. Functionally, mitochondrial GTPase involved in mitochondrial trafficking. Probably involved in control of anterograde transport of mitochondria and their subcellular distribution. This Saccharomyces cerevisiae (strain ATCC 204508 / S288c) (Baker's yeast) protein is Mitochondrial Rho GTPase 1 (GEM1).